The sequence spans 588 residues: Aspartate--tRNA ligase (588 aa).

L-aspartate is bound at residue Glu172. The interval Gln196–Lys199 is aspartate. Position 218 (Arg218) interacts with L-aspartate. Residues Arg218–Glu220 and Gln227 contribute to the ATP site. His449 is a binding site for L-aspartate. Glu483 contacts ATP. L-aspartate is bound at residue Arg490. Gly535–Arg538 serves as a coordination point for ATP.

This sequence belongs to the class-II aminoacyl-tRNA synthetase family. Type 1 subfamily. In terms of assembly, homodimer.

The protein localises to the cytoplasm. The enzyme catalyses tRNA(Asp) + L-aspartate + ATP = L-aspartyl-tRNA(Asp) + AMP + diphosphate. Catalyzes the attachment of L-aspartate to tRNA(Asp) in a two-step reaction: L-aspartate is first activated by ATP to form Asp-AMP and then transferred to the acceptor end of tRNA(Asp). This Haemophilus influenzae (strain ATCC 51907 / DSM 11121 / KW20 / Rd) protein is Aspartate--tRNA ligase.